The sequence spans 363 residues: Probable L-tyrosine/L-aspartate decarboxylase (363 aa).

Position 224 is an N6-(pyridoxal phosphate)lysine (Lys-224).

This sequence belongs to the group II decarboxylase family. MfnA subfamily. It depends on pyridoxal 5'-phosphate as a cofactor.

It catalyses the reaction L-tyrosine + H(+) = tyramine + CO2. The enzyme catalyses L-aspartate + H(+) = beta-alanine + CO2. The protein operates within cofactor biosynthesis; methanofuran biosynthesis. It participates in cofactor biosynthesis; coenzyme A biosynthesis. Functionally, catalyzes the decarboxylation of L-tyrosine to produce tyramine for methanofuran biosynthesis. Can also catalyze the decarboxylation of L-aspartate to produce beta-alanine for coenzyme A (CoA) biosynthesis. In Methanosphaerula palustris (strain ATCC BAA-1556 / DSM 19958 / E1-9c), this protein is Probable L-tyrosine/L-aspartate decarboxylase.